Reading from the N-terminus, the 460-residue chain is NADH-ubiquinone oxidoreductase chain 4 (460 aa).

12 consecutive transmembrane segments (helical) span residues 20 to 42 (PKWLWTTTTAHSLLIASISLMWF), 61 to 81 (PLSTPLLVLTCWLLPLMILAS), 93 to 113 (QRLYITLLASLQTFLIMAFGA), 114 to 134 (TEIIMFYIMFEATLIPTLIII), 148 to 168 (TYFLFYTLAGSLPLLVALLLL), 195 to 215 (IWWAACLIAFLVKMPLYGVHL), 225 to 245 (PVAGSMVLAAVLLKLGGYGMM), 258 to 278 (LAYPFIILALWGIIMTGSICL), 285 to 304 (SLIAYSSVSHMGLVAGGILI), 308 to 330 (WGFSGAIILMIAHGLVSSALFCL), 351 to 371 (IIFPLTAVWWFIANLANLALP), and 394 to 414 (ILLTGLGTLITAGYSLYMFLM).

The protein belongs to the complex I subunit 4 family.

The protein localises to the mitochondrion membrane. The catalysed reaction is a ubiquinone + NADH + 5 H(+)(in) = a ubiquinol + NAD(+) + 4 H(+)(out). Core subunit of the mitochondrial membrane respiratory chain NADH dehydrogenase (Complex I) that is believed to belong to the minimal assembly required for catalysis. Complex I functions in the transfer of electrons from NADH to the respiratory chain. The immediate electron acceptor for the enzyme is believed to be ubiquinone. This Carassius auratus (Goldfish) protein is NADH-ubiquinone oxidoreductase chain 4 (MT-ND4).